The sequence spans 323 residues: Cytosolic sulfotransferase 5 (323 aa).

Residue 69–74 (KCGTTW) participates in 3'-phosphoadenylyl sulfate binding. Residue His135 is the Proton acceptor of the active site. Residues Arg157, Ser165, and 289-291 (RKG) each bind 3'-phosphoadenylyl sulfate.

The protein belongs to the sulfotransferase 1 family. In terms of tissue distribution, expressed in inflorescence stems, roots and siliques.

It is found in the cytoplasm. Its function is as follows. Sulfotransferase that utilizes 3'-phospho-5'-adenylyl sulfate (PAPS) as sulfonate donor to specifically catalyze the sulfate conjugation of flavones and flavonols. Strictly specific for the position 7. Substrate preference is kaempferol 3-sulfate &gt; isorhamnetin &gt; kaempferol. The chain is Cytosolic sulfotransferase 5 (SOT5) from Arabidopsis thaliana (Mouse-ear cress).